Consider the following 318-residue polypeptide: Aspartate carbamoyltransferase catalytic subunit (318 aa).

Positions 66 and 67 each coordinate carbamoyl phosphate. Lys-94 serves as a coordination point for L-aspartate. Carbamoyl phosphate is bound by residues Arg-116, His-144, and Gln-147. 2 residues coordinate L-aspartate: Arg-177 and Arg-231. Positions 272 and 273 each coordinate carbamoyl phosphate.

The protein belongs to the aspartate/ornithine carbamoyltransferase superfamily. ATCase family. Heterododecamer (2C3:3R2) of six catalytic PyrB chains organized as two trimers (C3), and six regulatory PyrI chains organized as three dimers (R2).

The catalysed reaction is carbamoyl phosphate + L-aspartate = N-carbamoyl-L-aspartate + phosphate + H(+). The protein operates within pyrimidine metabolism; UMP biosynthesis via de novo pathway; (S)-dihydroorotate from bicarbonate: step 2/3. Catalyzes the condensation of carbamoyl phosphate and aspartate to form carbamoyl aspartate and inorganic phosphate, the committed step in the de novo pyrimidine nucleotide biosynthesis pathway. The chain is Aspartate carbamoyltransferase catalytic subunit from Frankia casuarinae (strain DSM 45818 / CECT 9043 / HFP020203 / CcI3).